We begin with the raw amino-acid sequence, 231 residues long: Heptaprenylglyceryl phosphate synthase (231 aa).

Lys12 is a sn-glycerol 1-phosphate binding site. Residues Asp14 and Thr40 each contribute to the Mg(2+) site. Residues 159–164, Gly189, and 209–210 each bind sn-glycerol 1-phosphate; these read YMEYSG and GN.

The protein belongs to the GGGP/HepGP synthase family. Group I subfamily. In terms of assembly, homodimer. Requires Mg(2+) as cofactor.

The catalysed reaction is sn-glycerol 1-phosphate + all-trans-heptaprenyl diphosphate = 3-heptaprenyl-sn-glycero-1-phosphate + diphosphate. It functions in the pathway membrane lipid metabolism; glycerophospholipid metabolism. Prenyltransferase that catalyzes in vivo the transfer of the heptaprenyl moiety of heptaprenyl pyrophosphate (HepPP; 35 carbon atoms) to the C3 hydroxyl of sn-glycerol-1-phosphate (G1P), producing heptaprenylglyceryl phosphate (HepGP). This reaction is an ether-bond-formation step in the biosynthesis of archaea-type G1P-based membrane lipids found in Bacillales. This chain is Heptaprenylglyceryl phosphate synthase, found in Anoxybacillus flavithermus (strain DSM 21510 / WK1).